The following is a 262-amino-acid chain: Nitrate transport protein NasD (262 aa).

Positions 5-239 constitute an ABC transporter domain; it reads IQVQGVSQRF…RPRNRVQLAD (235 aa). An ATP-binding site is contributed by 41 to 48; that stretch reads GHSGCGKS.

This sequence belongs to the ABC transporter superfamily.

It localises to the cell membrane. In terms of biological role, probably part of a high-affinity binding-protein-dependent transport system for nitrate. Probably responsible for energy coupling to the transport system. The polypeptide is Nitrate transport protein NasD (nasD) (Klebsiella oxytoca).